We begin with the raw amino-acid sequence, 585 residues long: ATP-dependent lipid A-core flippase (585 aa).

Helical transmembrane passes span 16–36, 66–86, 156–176, 252–272, and 278–298; these read LWPYISFYKAGLSVAVVALII, FLSMMPYYLVGLMILRGASGF, IIGLMALMFWNSWQLSAILLV, AIANPVIQVIASFALVVVLVL, and LRAELTPGTFAVVFGAMFGLM. The 285-residue stretch at 29-313 folds into the ABC transmembrane type-1 domain; sequence VAVVALIINA…LTNVTSQFQR (285 aa). An ABC transporter domain is found at 345-581; that stretch reads IQVKNVTFTY…DGAYAQLHRI (237 aa). 379–386 contacts ATP; it reads GRSGSGKS.

The protein belongs to the ABC transporter superfamily. Lipid exporter (TC 3.A.1.106) family. In terms of assembly, homodimer.

It is found in the cell inner membrane. The catalysed reaction is ATP + H2O + lipid A-core oligosaccharideSide 1 = ADP + phosphate + lipid A-core oligosaccharideSide 2.. Involved in lipopolysaccharide (LPS) biosynthesis. Translocates lipid A-core from the inner to the outer leaflet of the inner membrane. Transmembrane domains (TMD) form a pore in the inner membrane and the ATP-binding domain (NBD) is responsible for energy generation. The protein is ATP-dependent lipid A-core flippase of Photobacterium profundum (strain SS9).